The primary structure comprises 377 residues: MAREQDSINSHPLDKYIDENSANESEIIKSSSQFSHEDQQKIDKLSKQIKPMDNDGLLNYGTEAQSNMSQFSHRILNEVKTTDVGPVGDSLNGLMSKLKSVNPEELNPENQSKLKRIFKRTKASVNEIFSKMQSVGSQIDRISIELDKHKNNLKKDIDMLDELYDMNKDYFDELSIYIEAAKHKQYVLQQDEIPKLREQAKSTGNQMDVQAASDMEQFVDRLDKRIYDLQLSRQIAIQTAPQIRMIQNVNQALAEKIQSSILTSIPLWKNQMSIALTLMRQRNAVSAQKAVTDTTNDLLLKNSELLKQNALATATENERGVVDIETLKTTQKDIIETIEQTLQIQEHGRTKRKQAESELNELETELQNQLLDMKENK.

Positions 1–18 (MAREQDSINSHPLDKYID) are enriched in basic and acidic residues. A disordered region spans residues 1 to 39 (MAREQDSINSHPLDKYIDENSANESEIIKSSSQFSHEDQ). A compositionally biased stretch (polar residues) spans 20 to 34 (NSANESEIIKSSSQF).

It belongs to the TelA family.

The polypeptide is TelA-like protein SSP1345 (Staphylococcus saprophyticus subsp. saprophyticus (strain ATCC 15305 / DSM 20229 / NCIMB 8711 / NCTC 7292 / S-41)).